Reading from the N-terminus, the 143-residue chain is Nucleoside diphosphate kinase (143 aa).

Residues Lys11, Phe59, Arg87, Thr93, Arg104, and Asn114 each contribute to the ATP site. The Pros-phosphohistidine intermediate role is filled by His117.

The protein belongs to the NDK family. As to quaternary structure, homotetramer. It depends on Mg(2+) as a cofactor.

Its subcellular location is the cytoplasm. It catalyses the reaction a 2'-deoxyribonucleoside 5'-diphosphate + ATP = a 2'-deoxyribonucleoside 5'-triphosphate + ADP. The catalysed reaction is a ribonucleoside 5'-diphosphate + ATP = a ribonucleoside 5'-triphosphate + ADP. Its function is as follows. Major role in the synthesis of nucleoside triphosphates other than ATP. The ATP gamma phosphate is transferred to the NDP beta phosphate via a ping-pong mechanism, using a phosphorylated active-site intermediate. The protein is Nucleoside diphosphate kinase of Alcanivorax borkumensis (strain ATCC 700651 / DSM 11573 / NCIMB 13689 / SK2).